Here is a 296-residue protein sequence, read N- to C-terminus: 33 kDa chaperonin (296 aa).

Cystine bridges form between Cys-236/Cys-238 and Cys-269/Cys-272.

It belongs to the HSP33 family. Under oxidizing conditions two disulfide bonds are formed involving the reactive cysteines. Under reducing conditions zinc is bound to the reactive cysteines and the protein is inactive.

The protein resides in the cytoplasm. Its function is as follows. Redox regulated molecular chaperone. Protects both thermally unfolding and oxidatively damaged proteins from irreversible aggregation. Plays an important role in the bacterial defense system toward oxidative stress. The sequence is that of 33 kDa chaperonin from Lactobacillus helveticus (strain DPC 4571).